Here is a 306-residue protein sequence, read N- to C-terminus: UDP-3-O-acyl-N-acetylglucosamine deacetylase (306 aa).

Zn(2+)-binding residues include His79, His238, and Asp242. Catalysis depends on His265, which acts as the Proton donor.

The protein belongs to the LpxC family. Zn(2+) serves as cofactor.

The catalysed reaction is a UDP-3-O-[(3R)-3-hydroxyacyl]-N-acetyl-alpha-D-glucosamine + H2O = a UDP-3-O-[(3R)-3-hydroxyacyl]-alpha-D-glucosamine + acetate. The protein operates within glycolipid biosynthesis; lipid IV(A) biosynthesis; lipid IV(A) from (3R)-3-hydroxytetradecanoyl-[acyl-carrier-protein] and UDP-N-acetyl-alpha-D-glucosamine: step 2/6. Catalyzes the hydrolysis of UDP-3-O-myristoyl-N-acetylglucosamine to form UDP-3-O-myristoylglucosamine and acetate, the committed step in lipid A biosynthesis. The protein is UDP-3-O-acyl-N-acetylglucosamine deacetylase of Shewanella frigidimarina (strain NCIMB 400).